Reading from the N-terminus, the 293-residue chain is Protease HtpX (293 aa).

The next 2 membrane-spanning stretches (helical) occupy residues 4–24 and 34–54; these read IALFLLTNLAVMLVFGLVLSL and GLMIMAGLFGFGGAFVSLLMS. Histidine 139 lines the Zn(2+) pocket. Glutamate 140 is a catalytic residue. A Zn(2+)-binding site is contributed by histidine 143. Transmembrane regions (helical) follow at residues 158-178 and 193-213; these read VVNTFVIFISRLIAQIAAGFL and MVYFAVSMVLELVFGILASII. Glutamate 222 contacts Zn(2+).

The protein belongs to the peptidase M48B family. The cofactor is Zn(2+).

The protein resides in the cell inner membrane. This Yersinia pseudotuberculosis serotype O:1b (strain IP 31758) protein is Protease HtpX.